Here is a 398-residue protein sequence, read N- to C-terminus: Phosphoglycerate kinase (398 aa).

Substrate-binding positions include 23 to 25, Arg38, 61 to 64, Arg122, and Arg155; these read DFN and HMGK. ATP is bound by residues Lys206, Gly297, Glu328, and 354 to 357; that span reads GGDS.

The protein belongs to the phosphoglycerate kinase family. As to quaternary structure, monomer.

It localises to the cytoplasm. The enzyme catalyses (2R)-3-phosphoglycerate + ATP = (2R)-3-phospho-glyceroyl phosphate + ADP. It participates in carbohydrate degradation; glycolysis; pyruvate from D-glyceraldehyde 3-phosphate: step 2/5. The protein is Phosphoglycerate kinase of Clostridium botulinum (strain Kyoto / Type A2).